Consider the following 106-residue polypeptide: MSKSQSLQDPYLNALRKERVPVSIYLVNGIKLQGQIESFDAFVILLRNNISQMVYKHAVSTIVPSRNIHLSREEMGLEDEAGEEISAEYTPNAEGQAEATADPLYD.

Residues 9-68 (DPYLNALRKERVPVSIYLVNGIKLQGQIESFDAFVILLRNNISQMVYKHAVSTIVPSRNI) enclose the Sm domain. Residues 78–106 (EDEAGEEISAEYTPNAEGQAEATADPLYD) are disordered.

This sequence belongs to the Hfq family. In terms of assembly, homohexamer.

In terms of biological role, RNA chaperone that binds small regulatory RNA (sRNAs) and mRNAs to facilitate mRNA translational regulation in response to envelope stress, environmental stress and changes in metabolite concentrations. Also binds with high specificity to tRNAs. This chain is RNA-binding protein Hfq, found in Dichelobacter nodosus (strain VCS1703A).